The following is a 112-amino-acid chain: Nitrogenase-stabilizing/protective protein NifW (112 aa).

This sequence belongs to the NifW family. In terms of assembly, homotrimer; associates with NifD.

Its function is as follows. May protect the nitrogenase Fe-Mo protein from oxidative damage. This chain is Nitrogenase-stabilizing/protective protein NifW, found in Burkholderia vietnamiensis (strain G4 / LMG 22486) (Burkholderia cepacia (strain R1808)).